The primary structure comprises 270 residues: ATP synthase subunit b 1 (270 aa).

A helical transmembrane segment spans residues 2–22; sequence LIDWFTVIAQLINFLVLVWLL.

The protein belongs to the ATPase B chain family. F-type ATPases have 2 components, F(1) - the catalytic core - and F(0) - the membrane proton channel. F(1) has five subunits: alpha(3), beta(3), gamma(1), delta(1), epsilon(1). F(0) has three main subunits: a(1), b(2) and c(10-14). The alpha and beta chains form an alternating ring which encloses part of the gamma chain. F(1) is attached to F(0) by a central stalk formed by the gamma and epsilon chains, while a peripheral stalk is formed by the delta and b chains.

Its subcellular location is the cell inner membrane. F(1)F(0) ATP synthase produces ATP from ADP in the presence of a proton or sodium gradient. F-type ATPases consist of two structural domains, F(1) containing the extramembraneous catalytic core and F(0) containing the membrane proton channel, linked together by a central stalk and a peripheral stalk. During catalysis, ATP synthesis in the catalytic domain of F(1) is coupled via a rotary mechanism of the central stalk subunits to proton translocation. In terms of biological role, component of the F(0) channel, it forms part of the peripheral stalk, linking F(1) to F(0). In Marinomonas sp. (strain MWYL1), this protein is ATP synthase subunit b 1.